The primary structure comprises 353 residues: Phosphoribosylformylglycinamidine cyclo-ligase (353 aa).

Belongs to the AIR synthase family.

The protein localises to the cytoplasm. It catalyses the reaction 2-formamido-N(1)-(5-O-phospho-beta-D-ribosyl)acetamidine + ATP = 5-amino-1-(5-phospho-beta-D-ribosyl)imidazole + ADP + phosphate + H(+). The protein operates within purine metabolism; IMP biosynthesis via de novo pathway; 5-amino-1-(5-phospho-D-ribosyl)imidazole from N(2)-formyl-N(1)-(5-phospho-D-ribosyl)glycinamide: step 2/2. This Ralstonia nicotianae (strain ATCC BAA-1114 / GMI1000) (Ralstonia solanacearum) protein is Phosphoribosylformylglycinamidine cyclo-ligase.